The following is a 175-amino-acid chain: Nucleoplasmin-3 (175 aa).

Ala-2 is subject to N-acetylalanine. Ser-16 carries the post-translational modification Phosphoserine. Arg-27 is subject to Omega-N-methylarginine. 2 positions are modified to phosphoserine: Ser-147 and Ser-151.

This sequence belongs to the nucleoplasmin family. Interacts with NPM (via N-terminus). Forms a pentamer with NPM at a ratio 4:1 (NPM3/NPM). Two pentamers form a decamer. In terms of processing, phosphorylated. As to expression, predominantly expressed in testis.

It is found in the nucleus. The protein localises to the nucleolus. Its function is as follows. Plays a role in the regulation of diverse cellular processes such as ribosome biogenesis, chromatin remodeling or protein chaperoning. Modulates the histone chaperone function and the RNA-binding activity of nucleolar phosphoprotein B23/NPM. Efficiently mediates chromatin remodeling when included in a pentamer containing NPM3 and NPM. In Mus musculus (Mouse), this protein is Nucleoplasmin-3 (Npm3).